The sequence spans 231 residues: NDR1/HIN1-like protein 3 (231 aa).

A helical membrane pass occupies residues 47–67 (VIFNILITIAVLLGIAALIIW). Asn-102, Asn-135, Asn-145, and Asn-215 each carry an N-linked (GlcNAc...) asparagine glycan.

May form oligomers or be a component of larger protein complex in plasma membranes. Glycosylated. Expressed in roots, young and senescing leaves, cauline leaves, stems and siliques.

The protein localises to the cell membrane. Functionally, confers resistance to Pseudomonas syringae pv. tomato DC3000 (Pst DC3000). The chain is NDR1/HIN1-like protein 3 from Arabidopsis thaliana (Mouse-ear cress).